We begin with the raw amino-acid sequence, 93 residues long: Acylphosphatase (93 aa).

Residues Cys5 and Cys49 are joined by a disulfide bond. The 89-residue stretch at 5–93 folds into the Acylphosphatase-like domain; that stretch reads CIIAWVYGRV…ETLTGFSIRY (89 aa). The active site involves Asn38.

It belongs to the acylphosphatase family.

It carries out the reaction an acyl phosphate + H2O = a carboxylate + phosphate + H(+). This chain is Acylphosphatase, found in Salmonella paratyphi A (strain ATCC 9150 / SARB42).